An 86-amino-acid polypeptide reads, in one-letter code: Kappa-theraphotoxin-Cg1a 1 (86 aa).

The N-terminal stretch at 1-21 is a signal peptide; the sequence is MKVSVLITLAVLGVMFVWASA. The propeptide occupies 22 to 50; it reads AELEERGSDQRDSPAWLKSMERIFQSGER. Disulfide bonds link C52/C66, C59/C71, and C65/C78. The involved in active face stretch occupies residues 55 to 56; sequence MF. F84 carries the post-translational modification Phenylalanine amide.

The protein belongs to the neurotoxin 10 (Hwtx-1) family. 28 (Jztx-11) subfamily. Expressed by the venom gland.

The protein localises to the secreted. Its function is as follows. This toxin acts as a voltage-dependent gating-modifier. It inhibits the sodium conductance (IC(50)=124 nM) and slows the fast inactivation (EC(50)=1180 nM) of Nav1.5/SCN5A. It significantly shifts the activation to more depolarized voltages and decreases the deactivation of Nav1.5 currents upon extreme depolarization, but only slightly affects voltage-dependence of steady-state inactivation. In addition, this toxin causes an approximately five-fold decrease in the rate of recovery from inactivation and an approximately 1.9-fold reduction in the closed-state inactivation rate. This toxin integrates the functions of site 3 toxins (alpha-scorpion toxins) with site 4 toxins (beta-scorpion and spider toxins) by targeting multiple sites on Nav1.5. Also shows inhibition of voltage-gated potassium channels (5 uM completely inhibits Kv2.1/KCNB1, whereas 5 uM moderately inhibits Kv4.2/KCND2 Kv4.1/KCND1 channels). This chain is Kappa-theraphotoxin-Cg1a 1, found in Chilobrachys guangxiensis (Chinese earth tiger tarantula).